The primary structure comprises 629 residues: uncharacterized protein (629 aa).

The segment covering 1-11 (MSDDQQNGKQN) has biased composition (polar residues). Disordered stretches follow at residues 1–24 (MSDD…EQDD), 62–87 (SNNN…SNYN), 197–464 (SEES…SSLI), and 493–560 (PTPT…STPD). Over residues 247–264 (PSSSSSSSSLINSPTTSK) the composition is skewed to low complexity. A compositionally biased stretch (polar residues) spans 274 to 288 (PTINPKSLFGLSSTI). The span at 294–430 (VKTEKEKEKE…DETLNKETPH (137 aa)) shows a compositional bias: basic and acidic residues. Low complexity-rich tracts occupy residues 434–464 (PHIT…SSLI) and 493–554 (PTPT…NNNN).

This is an uncharacterized protein from Dictyostelium discoideum (Social amoeba).